The chain runs to 66 residues: Large ribosomal subunit protein bL33c (66 aa).

This sequence belongs to the bacterial ribosomal protein bL33 family.

The protein resides in the plastid. It is found in the chloroplast. The protein is Large ribosomal subunit protein bL33c of Angiopteris evecta (Mule's foot fern).